A 183-amino-acid polypeptide reads, in one-letter code: Phospholipase A2 inhibitor gamma subunit A1 (183 aa).

8 disulfides stabilise this stretch: Cys3/Cys28, Cys6/Cys13, Cys21/Cys49, Cys55/Cys76, Cys77/Cys82, Cys100/Cys125, Cys118/Cys147, and Cys151/Cys173. Asn158 is a glycosylation site (N-linked (GlcNAc...) asparagine).

Belongs to the CNF-like-inhibitor family. In terms of assembly, heterodimer of subunit A and subunit B. Expressed by the liver.

The protein resides in the secreted. Phospholipase A2 (PA2) inhibitor. Inhibits the enzymatic activity of PA2 of Deinagkistrodon acutus. Also shows a wide anti-hemorrhage activities to D.acutus, Naja atra and Agkistrodon halys venom. The native protein is more potent than the recombinant one. This Trimerodytes annularis (Red-bellied annulate keelback) protein is Phospholipase A2 inhibitor gamma subunit A1.